The following is a 341-amino-acid chain: Tryptophan--tRNA ligase (341 aa).

Residues 11–13 and 19–20 contribute to the ATP site; these read RPT and GH. Residues 12 to 20 carry the 'HIGH' region motif; the sequence is PTGKLHIGH. Asp-140 contributes to the L-tryptophan binding site. ATP contacts are provided by residues 152–154, Leu-194, and 202–206; these read GND and KMSKS. The short motif at 202–206 is the 'KMSKS' region element; it reads KMSKS.

Belongs to the class-I aminoacyl-tRNA synthetase family. In terms of assembly, homodimer.

The protein localises to the cytoplasm. The enzyme catalyses tRNA(Trp) + L-tryptophan + ATP = L-tryptophyl-tRNA(Trp) + AMP + diphosphate + H(+). Catalyzes the attachment of tryptophan to tRNA(Trp). The sequence is that of Tryptophan--tRNA ligase from Lactococcus lactis subsp. lactis (strain IL1403) (Streptococcus lactis).